Here is a 344-residue protein sequence, read N- to C-terminus: uncharacterized protein (344 aa).

Over M1–Y98 the chain is Cytoplasmic. A helical transmembrane segment spans residues I99–L119. Position 120 (H120) is a topological domain, lumenal. The helical transmembrane segment at F121–L141 threads the bilayer. Topologically, residues N142 to E169 are cytoplasmic. Residues I170–I192 form a helical membrane-spanning segment. The Lumenal segment spans residues T193–K198. Residues Y199 to L219 form a helical membrane-spanning segment. At Y220–D222 the chain is on the cytoplasmic side. A helical transmembrane segment spans residues V223–V243. At Y244–N273 the chain is on the lumenal side. A helical transmembrane segment spans residues A274–G294. Residues N295–I344 are Cytoplasmic-facing.

It localises to the endoplasmic reticulum membrane. This is an uncharacterized protein from Schizosaccharomyces pombe (strain 972 / ATCC 24843) (Fission yeast).